Consider the following 412-residue polypeptide: FAD-dependent monooxygenase nscC (412 aa).

A signal peptide spans 1–21; sequence MGKPQETILIIGAGIAGLTAS. The FAD site is built by Glu35 and Ala46. Residues Asn68 and Asn92 are each glycosylated (N-linked (GlcNAc...) asparagine). Arg119 contacts FAD. 3 N-linked (GlcNAc...) asparagine glycosylation sites follow: Asn170, Asn231, and Asn251. FAD-binding residues include Asp326 and Gly339.

This sequence belongs to the paxM FAD-dependent monooxygenase family. It depends on FAD as a cofactor.

Its pathway is secondary metabolite biosynthesis. Its function is as follows. FAD-dependent monooxygenase; part of the gene cluster that mediates the biosynthesis of neosartoricin B, a prenylated anthracenone that probably exhibits T-cell antiproliferative activity, suggestive of a physiological role as an immunosuppressive agent. The non-reducing polyketide synthase nscA probably synthesizes and cyclizes the decaketide backbone. The hydrolase nscB then mediates the product release through hydrolysis followed by spontaneous decarboxylation. The prenyltransferase nscD catalyzes the addition of the dimethylallyl group to the aromatic C5. The FAD-dependent monooxygenase nscC is then responsible for the stereospecific hydroxylation at C2. Neosartoricin B can be converted into two additional compounds neosartoricins C and D. Neosartoricin C is a spirocyclic compound that is cyclized through the attack of C3 hydroxyl on C14, followed by dehydration. On the other hand, neosartoricin D is a further cyclized compound in which attack of C2 on C14 in neosartoricin C results in the formation of the acetal-containing dioxabicyclo-octanone ring. Both of these compounds are novel and possibly represent related metabolites of the gene cluster. The sequence is that of FAD-dependent monooxygenase nscC from Trichophyton rubrum (strain ATCC MYA-4607 / CBS 118892) (Athlete's foot fungus).